A 328-amino-acid chain; its full sequence is Gonadotropin-releasing hormone receptor (328 aa).

Topologically, residues 1 to 38 are extracellular; it reads MANSDSPEQNENHCSAINSSIPLTPGSLPTLTLSGKIR. The N-linked (GlcNAc...) asparagine glycan is linked to asparagine 18. A helical membrane pass occupies residues 39-58; the sequence is VTVTFFLFLLSTIFNTSFLL. At 59–77 the chain is on the cytoplasmic side; the sequence is KLQNWTQRKEKRKKLSRMK. A helical transmembrane segment spans residues 78 to 97; that stretch reads LLLKHLTLANLLETLIVMPL. Over 98–115 the chain is Extracellular; the sequence is DGMWNITVQWYAGELLCK. Residue asparagine 102 is glycosylated (N-linked (GlcNAc...) asparagine). Cysteine 114 and cysteine 196 are disulfide-bonded. Residues 116-137 traverse the membrane as a helical segment; the sequence is VLSYLKLFSMYAPAFMMVVISL. Residues 138–164 lie on the Cytoplasmic side of the membrane; that stretch reads DRSLAITKPLAVKSNSKLGQFMIGLAW. Residues 165 to 184 traverse the membrane as a helical segment; sequence LLSSIFAGPQLYIFGMIHLA. Topologically, residues 185–212 are extracellular; sequence DDSGQTEGFSQCVTHCSFPQWWHQAFYN. A helical membrane pass occupies residues 213 to 232; that stretch reads FFTFSCLFIIPLLIMVICNA. Topologically, residues 233–281 are cytoplasmic; it reads KIIFTLTRVLHQDPHKLQLNQSKNNIPRARLRTLKMTVAFATSFTVCWT. The helical transmembrane segment at 282–300 threads the bilayer; the sequence is PYYVLGIWYWFDPDMVNRV. Residues 301 to 306 lie on the Extracellular side of the membrane; the sequence is SDPVNH. Residues 307 to 326 form a helical membrane-spanning segment; it reads FFFLFAFLNPCFDPLIYGYF. Residues 327 to 328 lie on the Cytoplasmic side of the membrane; the sequence is SL.

The protein belongs to the G-protein coupled receptor 1 family.

The protein resides in the cell membrane. In terms of biological role, receptor for gonadotropin releasing hormone (GnRH) that mediates the action of GnRH to stimulate the secretion of the gonadotropic hormones luteinizing hormone (LH) and follicle-stimulating hormone (FSH). This receptor mediates its action by association with G-proteins that activate a phosphatidylinositol-calcium second messenger system. The chain is Gonadotropin-releasing hormone receptor (GNRHR) from Bos taurus (Bovine).